We begin with the raw amino-acid sequence, 307 residues long: Urease accessory protein UreD (307 aa).

It belongs to the UreD family. UreD, UreF and UreG form a complex that acts as a GTP-hydrolysis-dependent molecular chaperone, activating the urease apoprotein by helping to assemble the nickel containing metallocenter of UreC. The UreE protein probably delivers the nickel.

The protein localises to the cytoplasm. Required for maturation of urease via the functional incorporation of the urease nickel metallocenter. The sequence is that of Urease accessory protein UreD from Prochlorococcus marinus (strain NATL1A).